Here is a 165-residue protein sequence, read N- to C-terminus: MLGVQKKRSTRKTAARKTVVRKPAAKKTAAKKAPVRKVAAKKTVARKTVAKKTVAARKPVAKKATAKKAPVRKVAAKKTVARKTVAKKTVAARKPVAKRVASTKKSSVAVKAGVCMKKHKHTAACGRVAASGVKVCASAAKRKTNPNRSRTAHSWRQQLMKLVAR.

Composition is skewed to basic residues over residues 1–50 (MLGV…KTVA) and 59–80 (PVAK…KKTV). A disordered region spans residues 1-80 (MLGVQKKRST…VRKVAAKKTV (80 aa)).

Belongs to the histone H1/H5 family. HCT subfamily.

Functionally, might have a role in establishing the nucleoid structure of elementary bodies. The chain is Histone H1-like protein HC2 (hctB) from Chlamydia trachomatis.